The chain runs to 479 residues: Glutamyl-tRNA(Gln) amidotransferase subunit A (479 aa).

Catalysis depends on charge relay system residues lysine 71 and serine 146. Catalysis depends on serine 170, which acts as the Acyl-ester intermediate.

It belongs to the amidase family. GatA subfamily. As to quaternary structure, heterotrimer of A, B and C subunits.

It catalyses the reaction L-glutamyl-tRNA(Gln) + L-glutamine + ATP + H2O = L-glutaminyl-tRNA(Gln) + L-glutamate + ADP + phosphate + H(+). In terms of biological role, allows the formation of correctly charged Gln-tRNA(Gln) through the transamidation of misacylated Glu-tRNA(Gln) in organisms which lack glutaminyl-tRNA synthetase. The reaction takes place in the presence of glutamine and ATP through an activated gamma-phospho-Glu-tRNA(Gln). The sequence is that of Glutamyl-tRNA(Gln) amidotransferase subunit A from Lactobacillus gasseri (strain ATCC 33323 / DSM 20243 / BCRC 14619 / CIP 102991 / JCM 1131 / KCTC 3163 / NCIMB 11718 / NCTC 13722 / AM63).